A 157-amino-acid polypeptide reads, in one-letter code: Putative tRNA (cytidine(34)-2'-O)-methyltransferase (157 aa).

Residues I79, G104, and I125 each contribute to the S-adenosyl-L-methionine site.

Belongs to the class IV-like SAM-binding methyltransferase superfamily. RNA methyltransferase TrmH family. TrmL subfamily.

The protein resides in the cytoplasm. The enzyme catalyses cytidine(34) in tRNA + S-adenosyl-L-methionine = 2'-O-methylcytidine(34) in tRNA + S-adenosyl-L-homocysteine + H(+). The catalysed reaction is 5-carboxymethylaminomethyluridine(34) in tRNA(Leu) + S-adenosyl-L-methionine = 5-carboxymethylaminomethyl-2'-O-methyluridine(34) in tRNA(Leu) + S-adenosyl-L-homocysteine + H(+). Could methylate the ribose at the nucleotide 34 wobble position in tRNA. This chain is Putative tRNA (cytidine(34)-2'-O)-methyltransferase, found in Geobacillus stearothermophilus (Bacillus stearothermophilus).